The following is a 282-amino-acid chain: E3 ubiquitin-protein ligase SIAH1B (282 aa).

Residues Met-1 to Pro-17 show a composition bias toward polar residues. Positions Met-1 to Pro-23 are disordered. At Ser-19 the chain carries Phosphoserine; by ATM and ATR. The RING-type zinc-finger motif lies at Cys-41 to Arg-76. Residues Val-90–Cys-282 are SBD. Residues Ser-93 to Lys-153 form an SIAH-type zinc finger. Positions 98, 105, 117, 121, 128, 135, 147, and 152 each coordinate Zn(2+).

This sequence belongs to the SINA (Seven in absentia) family. In terms of assembly, homodimer. Post-translationally, phosphorylated on Ser-19 by ATM and ATR. In terms of tissue distribution, widely expressed at low level in embryos and adults. Due to the high similarity between SIAH1A and SIAH1B, it is difficult to distinguish its own tissue specificity. Overexpressed in endothelial cells of adult lung.

Its subcellular location is the cytoplasm. The protein localises to the nucleus. It catalyses the reaction S-ubiquitinyl-[E2 ubiquitin-conjugating enzyme]-L-cysteine + [acceptor protein]-L-lysine = [E2 ubiquitin-conjugating enzyme]-L-cysteine + N(6)-ubiquitinyl-[acceptor protein]-L-lysine.. Its pathway is protein modification; protein ubiquitination. E3 ubiquitin-protein ligase that mediates ubiquitination and subsequent proteasomal degradation of target proteins. E3 ubiquitin ligases accept ubiquitin from an E2 ubiquitin-conjugating enzyme in the form of a thioester and then directly transfers the ubiquitin to targeted substrates. Mediates E3 ubiquitin ligase activity either through direct binding to substrates or by functioning as the essential RING domain subunit of larger E3 complexes. The sequence is that of E3 ubiquitin-protein ligase SIAH1B (Siah1b) from Mus musculus (Mouse).